Reading from the N-terminus, the 483-residue chain is Glutamyl-tRNA(Gln) amidotransferase subunit A (483 aa).

Catalysis depends on charge relay system residues Lys-76 and Ser-151. Ser-175 serves as the catalytic Acyl-ester intermediate.

This sequence belongs to the amidase family. GatA subfamily. Heterotrimer of A, B and C subunits.

The catalysed reaction is L-glutamyl-tRNA(Gln) + L-glutamine + ATP + H2O = L-glutaminyl-tRNA(Gln) + L-glutamate + ADP + phosphate + H(+). Its function is as follows. Allows the formation of correctly charged Gln-tRNA(Gln) through the transamidation of misacylated Glu-tRNA(Gln) in organisms which lack glutaminyl-tRNA synthetase. The reaction takes place in the presence of glutamine and ATP through an activated gamma-phospho-Glu-tRNA(Gln). The sequence is that of Glutamyl-tRNA(Gln) amidotransferase subunit A from Pseudomonas syringae pv. syringae (strain B728a).